The sequence spans 450 residues: Phosphoglucosamine mutase (450 aa).

The active-site Phosphoserine intermediate is the Ser103. 4 residues coordinate Mg(2+): Ser103, Asp243, Asp245, and Asp247. Ser103 is subject to Phosphoserine.

Belongs to the phosphohexose mutase family. Mg(2+) is required as a cofactor. Post-translationally, activated by phosphorylation.

It catalyses the reaction alpha-D-glucosamine 1-phosphate = D-glucosamine 6-phosphate. Its function is as follows. Catalyzes the conversion of glucosamine-6-phosphate to glucosamine-1-phosphate. In Lactobacillus helveticus (strain DPC 4571), this protein is Phosphoglucosamine mutase.